A 595-amino-acid polypeptide reads, in one-letter code: Estrogen receptor (595 aa).

The interval 1–184 (MTMTLHTKAS…AMESVKETRY (184 aa)) is modulating(transactivation AF-1); mediates interaction with MACROD1. O-linked (GlcNAc) serine glycosylation is present at Ser10. The required for interaction with NCOA1 stretch occupies residues 35 to 47 (LERALSEVYVDSS). The interaction with DDX5; self-association stretch occupies residues 35–174 (LERALSEVYV…LSSSSEKGSM (140 aa)). Residues Ser103 and Ser105 each carry the phosphoserine; by CDK2 modification. At Ser118 the chain carries Phosphoserine. The disordered stretch occupies residues 143 to 174 (DSGPPAFYRSNSDNRRQSGRERLSSSSEKGSM). Residues 154–165 (SDNRRQSGRERL) are compositionally biased toward basic and acidic residues. A Phosphoserine; by CK2 modification is found at Ser167. NR C4-type zinc fingers lie at residues 185-205 (CAVC…CEGC) and 221-245 (CPAT…LRKC). The segment at residues 185-250 (CAVCNDYASG…RLRKCYEVGM (66 aa)) is a DNA-binding region (nuclear receptor). The mediates interaction with DNTTIP2 stretch occupies residues 185–310 (CAVCNDYASG…TKKNSPALSL (126 aa)). A hinge region spans residues 251–310 (MKGGIRKDRRGGRMLKHKRQRDDLEGRNDMGPSGDMRATNLWPSPLVIKHTKKNSPALSL). Arg260 is modified (asymmetric dimethylarginine; by PRMT1). Over residues 260-269 (RGGRMLKHKR) the composition is skewed to basic residues. Positions 260-285 (RGGRMLKHKRQRDDLEGRNDMGPSGD) are disordered. The tract at residues 262–595 (GRMLKHKRQR…SEAESFPNTI (334 aa)) is interaction with AKAP13. The interval 264 to 595 (MLKHKRQRDD…SEAESFPNTI (332 aa)) is self-association. An NR LBD domain is found at 311–547 (TADQMVSALL…DLLLEMLDAH (237 aa)). The segment at 311-595 (TADQMVSALL…SEAESFPNTI (285 aa)) is transactivation AF-2. 17beta-estradiol is bound by residues Glu353 and Arg394. Cys447 carries the S-palmitoyl cysteine lipid modification. His524 lines the 17beta-estradiol pocket. At Tyr537 the chain carries Phosphotyrosine; by Tyr-kinases. The segment at 554–578 (SRMGVSPEEPSQSQLTTTNSTSSHS) is disordered. Residues 564 to 578 (SQSQLTTTNSTSSHS) show a composition bias toward low complexity. Thr571 is a glycosylation site (O-linked (GlcNAc) threonine).

It belongs to the nuclear hormone receptor family. NR3 subfamily. As to quaternary structure, binds DNA as a homodimer. Can form a heterodimer with ESR2. Interacts with coactivator NCOA5. Interacts with PELP1, the interaction is enhanced by 17-beta-estradiol; the interaction increases ESR1 transcriptional activity. Interacts with NCOA7; the interaction is ligand-inducible. Interacts with AKAP13, CUEDC2, HEXIM1, KDM5A, MAP1S, SMARD1, and UBE1C. Interacts with MUC1; the interaction is stimulated by 7 beta-estradiol (E2) and enhances ESR1-mediated transcription. Interacts with DNTTIP2, and UIMC1. Interacts with KMT2D/MLL2. Interacts with ATAD2; the interaction is enhanced by estradiol. Interacts with KIF18A and LDB1. Interacts with RLIM (via its C-terminus). Interacts with MACROD1. Interacts with SH2D4A and PLCG. Interacts with SH2D4A; the interaction blocks binding to PLCG and inhibits estrogen-induced cell proliferation. Interacts with DYNLL1. Interacts with CCDC62; the interaction requires estradiol and appears to enhance the transcription of target genes. Interacts with NR2C1; the interaction prevents homodimerization of ESR1 and suppresses its transcriptional activity and cell growth. Interacts with DNAAF4. Interacts with PRMT2. Interacts with RBFOX2. Interacts with EP300; the interaction is estrogen-dependent and enhanced by CITED1. Interacts with CITED1; the interaction is estrogen-dependent. Interacts with FAM120B, FOXL2, PHB2 and SLC30A9. Interacts with coactivators NCOA3 and NCOA6. Interacts with STK3/MST2 only in the presence of SAV1 and vice-versa. Binds to CSNK1D. Interacts with NCOA2; NCOA2 can interact with ESR1 AF-1 and AF-2 domains simultaneously and mediate their transcriptional synergy. Interacts with DDX5. Interacts with NCOA1; the interaction seems to require a self-association of N-terminal and C-terminal regions. Interacts with ZNF366, DDX17, NFKB1, RELA, SP1 and SP3. Interacts with NRIP1. Interacts with GPER1; the interaction occurs in an estrogen-dependent manner. Interacts with CLOCK and the interaction is stimulated by estrogen. Interacts with TRIP4 (ufmylated); estrogen dependent. Interacts with LMTK3; the interaction phosphorylates ESR1 (in vitro) and protects it against proteasomal degradation. Interacts with CCAR2 (via N-terminus) in a ligand-independent manner. Interacts with ZFHX3. Interacts with SFR1 in a ligand-dependent and -independent manner. Interacts with DCAF13, LATS1 and DCAF1; regulates ESR1 ubiquitination and ubiquitin-mediated proteasomal degradation. Interacts (via DNA-binding domain) with POU4F2 (C-terminus); this interaction increases the estrogen receptor ESR1 transcriptional activity in a DNA- and ligand 17-beta-estradiol-independent manner. Interacts with ESRRB isoform 1. Interacts with UBE3A and WBP2. Interacts with GTF2B. Interacts with RBM39. In the absence of hormonal ligand, interacts with TACC1. Interacts with PI3KR1 or PI3KR2 and PTK2/FAK1. Interacts with SRC. Interacts with BAG1; the interaction is promoted in the absence of estradiol (17-beta-estradiol/E2). Interacts with and ubiquitinated by STUB1; the interaction is promoted in the absence of estradiol (17-beta-estradiol/E2). Interacts with NEDD8. In terms of processing, ubiquitinated; regulated by LATS1 via DCAF1 it leads to ESR1 proteasomal degradation. Deubiquitinated by OTUB1. Ubiquitinated by STUB1/CHIP; in the CA1 hippocampal region following loss of endogenous circulating estradiol (17-beta-estradiol/E2). Ubiquitinated by UBR5, leading to its degradation: UBR5 specifically recognizes and binds ligand-bound ESR1 when it is not associated with coactivators (NCOAs). In presence of NCOAs, the UBR5-degron is not accessible, preventing its ubiquitination and degradation. Phosphorylated by cyclin A/CDK2 and CK1. Phosphorylation probably enhances transcriptional activity. Dephosphorylation at Ser-118 by PPP5C inhibits its transactivation activity. Phosphorylated by LMTK3 (in vitro). Post-translationally, palmitoylated at Cys-447 by ZDHHC7 and ZDHHC21. Palmitoylation is required for plasma membrane targeting and for rapid intracellular signaling via ERK and AKT kinases and cAMP generation, but not for signaling mediated by the nuclear hormone receptor. In terms of processing, dimethylated by PRMT1 at Arg-260. The methylation may favor cytoplasmic localization. Demethylated by JMJD6 at Arg-260.

It is found in the nucleus. The protein localises to the cytoplasm. It localises to the golgi apparatus. The protein resides in the cell membrane. Functionally, nuclear hormone receptor. The steroid hormones and their receptors are involved in the regulation of eukaryotic gene expression and affect cellular proliferation and differentiation in target tissues. Ligand-dependent nuclear transactivation involves either direct homodimer binding to a palindromic estrogen response element (ERE) sequence or association with other DNA-binding transcription factors, such as AP-1/c-Jun, c-Fos, ATF-2, Sp1 and Sp3, to mediate ERE-independent signaling. Ligand binding induces a conformational change allowing subsequent or combinatorial association with multiprotein coactivator complexes through LXXLL motifs of their respective components. Mutual transrepression occurs between the estrogen receptor (ER) and NF-kappa-B in a cell-type specific manner. Decreases NF-kappa-B DNA-binding activity and inhibits NF-kappa-B-mediated transcription from the IL6 promoter and displace RELA/p65 and associated coregulators from the promoter. Recruited to the NF-kappa-B response element of the CCL2 and IL8 promoters and can displace CREBBP. Present with NF-kappa-B components RELA/p65 and NFKB1/p50 on ERE sequences. Can also act synergistically with NF-kappa-B to activate transcription involving respective recruitment adjacent response elements; the function involves CREBBP. Can activate the transcriptional activity of TFF1. Also mediates membrane-initiated estrogen signaling involving various kinase cascades. Essential for MTA1-mediated transcriptional regulation of BRCA1 and BCAS3. Maintains neuronal survival in response to ischemic reperfusion injury when in the presence of circulating estradiol (17-beta-estradiol/E2). The polypeptide is Estrogen receptor (ESR1) (Mesocricetus auratus (Golden hamster)).